Consider the following 490-residue polypeptide: Flap endonuclease 1 (490 aa).

Positions 1–106 are N-domain; the sequence is MGIKGLTKFL…DELTKRDERR (106 aa). Asp34 serves as a coordination point for Mg(2+). The DNA site is built by Arg47 and Arg72. Residues Asp88, Glu160, Glu162, Asp181, and Asp183 each contribute to the Mg(2+) site. The I-domain stretch occupies residues 124 to 266; that stretch reads LIKKQSVRTI…STAYKLLKKY (143 aa). Residue Glu160 participates in DNA binding. Positions 244 and 246 each coordinate DNA. Asp246 serves as a coordination point for Mg(2+). The interaction with PCNA stretch occupies residues 351–359; that stretch reads SQTCLDGFF. Disordered stretches follow at residues 364–396 and 421–490; these read NERK…SLSC and SSQA…SDED. A compositionally biased stretch (polar residues) spans 430–442; sequence ENSSEAPNQSSEI. The segment covering 443-454 has biased composition (basic and acidic residues); sequence KVNKIEENKDSE. Residues 455 to 469 show a composition bias toward polar residues; that stretch reads SSTVENTPSLQTKSP.

This sequence belongs to the XPG/RAD2 endonuclease family. FEN1 subfamily. Interacts with PCNA. Three molecules of FEN1 bind to one PCNA trimer with each molecule binding to one PCNA monomer. PCNA stimulates the nuclease activity without altering cleavage specificity. It depends on Mg(2+) as a cofactor. In terms of processing, phosphorylated. Phosphorylation upon DNA damage induces relocalization to the nuclear plasma.

It localises to the nucleus. It is found in the nucleolus. Its subcellular location is the nucleoplasm. The protein resides in the mitochondrion. Functionally, structure-specific nuclease with 5'-flap endonuclease and 5'-3' exonuclease activities involved in DNA replication and repair. During DNA replication, cleaves the 5'-overhanging flap structure that is generated by displacement synthesis when DNA polymerase encounters the 5'-end of a downstream Okazaki fragment. It enters the flap from the 5'-end and then tracks to cleave the flap base, leaving a nick for ligation. Also involved in the long patch base excision repair (LP-BER) pathway, by cleaving within the apurinic/apyrimidinic (AP) site-terminated flap. Acts as a genome stabilization factor that prevents flaps from equilibrating into structures that lead to duplications and deletions. Also possesses 5'-3' exonuclease activity on nicked or gapped double-stranded DNA, and exhibits RNase H activity. Also involved in replication and repair of rDNA and in repairing mitochondrial DNA. This is Flap endonuclease 1 from Cryptosporidium parvum (strain Iowa II).